The chain runs to 451 residues: MTANARIPARKLPLYRSLYVQVLFAVVVGVLLGHFYPEIGEKMKPLGDGFIKLIKMIIAPIIFCTVVVGIAGMEDMKKVGRTGGLALLYFEIVSSVALVIGLIVVNVLQPGAGMNVDASAIDTKSIAAYTAPGKMGTTTDFLMNIIPTTVVDAFAKGEILQVLLIAVMFGFALHRFGGRGTLVFDFIEKTSHVLFTIVGYIMKVAPIGAFGAMSFTIGKYGVGSLLSLGKLMGSFYLTCLLFVFVVLGLIARFHGFSIWKFVKYIKEELLIVLGTSSSESVLPRMMEKMENLGARKTTVGLVIPTGYSFNLDGTSIYLTMAAVFIAQATNTPLDITHQITLLLVLLLTSKGAAGITGSGFIVLAATLSAVGHVPVAGLALILGIDRFMSEARALTNLVGNGVATIVVAKWTGDLDTEQLKQRLDNPDWVAAQEPEAILDHKTERMDVSGSR.

The next 9 membrane-spanning stretches (helical) occupy residues 17 to 37, 53 to 73, 85 to 105, 153 to 173, 193 to 213, 231 to 251, 306 to 326, 339 to 359, and 361 to 381; these read SLYVQVLFAVVVGVLLGHFYP, LIKMIIAPIIFCTVVVGIAGM, LALLYFEIVSSVALVIGLIVV, AFAKGEILQVLLIAVMFGFAL, VLFTIVGYIMKVAPIGAFGAM, LMGSFYLTCLLFVFVVLGLIA, GYSFNLDGTSIYLTMAAVFIA, ITLLLVLLLTSKGAAGITGSG, and IVLAATLSAVGHVPVAGLALI.

This sequence belongs to the dicarboxylate/amino acid:cation symporter (DAACS) (TC 2.A.23) family.

It localises to the cell inner membrane. In terms of biological role, responsible for the transport of dicarboxylates such as succinate, fumarate, and malate from the periplasm across the membrane. The chain is C4-dicarboxylate transport protein from Paracidovorax citrulli (strain AAC00-1) (Acidovorax citrulli).